The primary structure comprises 943 residues: Protein translocase subunit SecA (943 aa).

Residues Gln-90, 108 to 112 (GEGKT), and Asp-509 each bind ATP. The disordered stretch occupies residues 534-561 (KPDNEHKPPIPQQRNSKSGGGFSANVDS).

Belongs to the SecA family. Monomer and homodimer. Part of the essential Sec protein translocation apparatus which comprises SecA, SecYEG and auxiliary proteins SecDF. Other proteins may also be involved.

It localises to the cell inner membrane. It is found in the cellular thylakoid membrane. Its subcellular location is the cytoplasm. It catalyses the reaction ATP + H2O + cellular proteinSide 1 = ADP + phosphate + cellular proteinSide 2.. Functionally, part of the Sec protein translocase complex. Interacts with the SecYEG preprotein conducting channel. Has a central role in coupling the hydrolysis of ATP to the transfer of proteins into and across the cell membrane, serving as an ATP-driven molecular motor driving the stepwise translocation of polypeptide chains across the membrane. Its function is as follows. Probably participates in protein translocation into and across both the cytoplasmic and thylakoid membranes in cyanobacterial cells. The polypeptide is Protein translocase subunit SecA (Prochlorococcus marinus subsp. pastoris (strain CCMP1986 / NIES-2087 / MED4)).